The sequence spans 217 residues: MTNTEIFDKLRDAIVNQDVAGTPELCKEALALGIPALDIITKGLSVGMKIVGDKFEAAEIFLPQIMMSGKAMSNAMEVLTPELEKNKKEGDEAGLAITFVAEGDIHDIGHRLVTTMLGANGFQIFDLGVDVLNETVVEEAAKHKGEKVLLVGSALMTTSMLGQKDLMDRLKEQKLRDSVKCMFGGAPVSDKWIEEIGADATAENAAEAAKVALEVMK.

The 91-residue stretch at 1–91 folds into the B12-binding N-terminal domain; sequence MTNTEIFDKL…ELEKNKKEGD (91 aa). The B12-binding domain maps to 93–217; it reads AGLAITFVAE…AAKVALEVMK (125 aa). H106 serves as a coordination point for methylcob(III)alamin.

This sequence belongs to the methylamine corrinoid protein family. Can form a complex with MtmB.

Its pathway is one-carbon metabolism; methanogenesis from methylamine. Functionally, acts as a methyl group carrier between MtmB and MtbA. In Methanosarcina barkeri, this protein is Monomethylamine corrinoid protein 2 (mtmC2).